Consider the following 365-residue polypeptide: Peptide chain release factor 2 (365 aa).

The residue at position 251 (glutamine 251) is an N5-methylglutamine.

It belongs to the prokaryotic/mitochondrial release factor family. Methylated by PrmC. Methylation increases the termination efficiency of RF2.

The protein resides in the cytoplasm. In terms of biological role, peptide chain release factor 2 directs the termination of translation in response to the peptide chain termination codons UGA and UAA. This Neorickettsia sennetsu (strain ATCC VR-367 / Miyayama) (Ehrlichia sennetsu) protein is Peptide chain release factor 2.